Consider the following 300-residue polypeptide: uncharacterized protein (300 aa).

4 CBS domains span residues 10-68 (RFPP…FRDV), 88-148 (FLKY…HVKV), 152-207 (MTSE…EDVL), and 226-284 (ISSK…GVEI).

This is an uncharacterized protein from Thermofilum pendens.